A 403-amino-acid polypeptide reads, in one-letter code: Tyrosine--tRNA ligase (403 aa).

The 'HIGH' region motif lies at 42–51; it reads PTAPDLHLGH. A 'KMSKS' region motif is present at residues 226–230; it reads KMSKS. K229 provides a ligand contact to ATP. The S4 RNA-binding domain maps to 339-400; that stretch reads LRIASLLTAA…GKRNFARVAL (62 aa).

The protein belongs to the class-I aminoacyl-tRNA synthetase family. TyrS type 2 subfamily. Homodimer.

It localises to the cytoplasm. The catalysed reaction is tRNA(Tyr) + L-tyrosine + ATP = L-tyrosyl-tRNA(Tyr) + AMP + diphosphate + H(+). In terms of biological role, catalyzes the attachment of tyrosine to tRNA(Tyr) in a two-step reaction: tyrosine is first activated by ATP to form Tyr-AMP and then transferred to the acceptor end of tRNA(Tyr). The sequence is that of Tyrosine--tRNA ligase from Xanthomonas campestris pv. campestris (strain ATCC 33913 / DSM 3586 / NCPPB 528 / LMG 568 / P 25).